A 636-amino-acid chain; its full sequence is Threonine--tRNA ligase (636 aa).

Residues 1-61 (MINITLPDGK…ETDASVVFIT (61 aa)) form the TGS domain. The segment at 238–528 (DHRKLGTALD…LIEHYAGKFP (291 aa)) is catalytic. The Zn(2+) site is built by Cys329, His380, and His505.

Belongs to the class-II aminoacyl-tRNA synthetase family. As to quaternary structure, homodimer. It depends on Zn(2+) as a cofactor.

It localises to the cytoplasm. It carries out the reaction tRNA(Thr) + L-threonine + ATP = L-threonyl-tRNA(Thr) + AMP + diphosphate + H(+). Its function is as follows. Catalyzes the attachment of threonine to tRNA(Thr) in a two-step reaction: L-threonine is first activated by ATP to form Thr-AMP and then transferred to the acceptor end of tRNA(Thr). Also edits incorrectly charged L-seryl-tRNA(Thr). The protein is Threonine--tRNA ligase of Desulfatibacillum aliphaticivorans.